A 368-amino-acid chain; its full sequence is Cobalt-precorrin-5B C(1)-methyltransferase (368 aa).

It belongs to the CbiD family.

It carries out the reaction Co-precorrin-5B + S-adenosyl-L-methionine = Co-precorrin-6A + S-adenosyl-L-homocysteine. It functions in the pathway cofactor biosynthesis; adenosylcobalamin biosynthesis; cob(II)yrinate a,c-diamide from sirohydrochlorin (anaerobic route): step 6/10. Functionally, catalyzes the methylation of C-1 in cobalt-precorrin-5B to form cobalt-precorrin-6A. This is Cobalt-precorrin-5B C(1)-methyltransferase from Brucella ovis (strain ATCC 25840 / 63/290 / NCTC 10512).